The sequence spans 875 residues: Serine/threonine-protein phosphatase 4 regulatory subunit 4 (875 aa).

2 HEAT repeats span residues 215-253 (ILPLVKSLCQDVEYEVRSCMCRQLENIAQGIGAELTKNV) and 254-292 (VLPELIELSRDESGSVRLAAFETLVNMLDMFDTDDRSQT). Residues 686 to 730 (MFQKKNYEKDLLDQEKEREELLFLEMEQLEKEKHQSDGRLASDKS) are a coiled coil. The segment covering 718–739 (KHQSDGRLASDKSFEKKRRDSR) has biased composition (basic and acidic residues). Residues 718 to 773 (KHQSDGRLASDKSFEKKRRDSRTSTQSLSKNLPISVPGPSSSTASTSKEIKKSKLT) form a disordered region. The span at 740–764 (TSTQSLSKNLPISVPGPSSSTASTS) shows a compositional bias: polar residues. Serine 777 carries the phosphoserine modification. Threonine 799 carries the phosphothreonine modification. Polar residues predominate over residues 825–859 (RNASSVPASFSPNPVMPSTSRGPGNTADPKSSGSK). Residues 825–875 (RNASSVPASFSPNPVMPSTSRGPGNTADPKSSGSKDAQPRKATLKSRKSNP) form a disordered region. Over residues 866-875 (ATLKSRKSNP) the composition is skewed to basic residues.

Serine/threonine-protein phosphatase 4 (PP4) occurs in different assemblies of the catalytic and one or more regulatory subunits. Component of the PP4 complex PPP4C-PPP4R4.

Its subcellular location is the cytoplasm. Its function is as follows. Putative regulatory subunit of serine/threonine-protein phosphatase 4. In Mus musculus (Mouse), this protein is Serine/threonine-protein phosphatase 4 regulatory subunit 4 (Ppp4r4).